We begin with the raw amino-acid sequence, 214 residues long: Charged multivesicular body protein 2b-B (214 aa).

Residues 25-55 (QRAITRDRAALEKQEKQLEMEIKKMAKTGNK) adopt a coiled-coil conformation. Positions 178 to 200 (MAKAPSAAKGLPSTSAAKSKGIS) are disordered. The short motif at 202–212 (EEIERQLKALG) is the MIT-interacting motif element.

The protein belongs to the SNF7 family. In terms of assembly, probable core component of the endosomal sorting required for transport complex III (ESCRT-III). ESCRT-III components are thought to multimerize to form a flat lattice on the perimeter membrane of the endosome.

The protein resides in the cytoplasm. It is found in the cytosol. Its subcellular location is the late endosome membrane. Functionally, probable core component of the endosomal sorting required for transport complex III (ESCRT-III) which is involved in multivesicular bodies (MVBs) formation and sorting of endosomal cargo proteins into MVBs. MVBs contain intraluminal vesicles (ILVs) that are generated by invagination and scission from the limiting membrane of the endosome and mostly are delivered to lysosomes enabling degradation of membrane proteins, such as stimulated growth factor receptors, lysosomal enzymes and lipids. The chain is Charged multivesicular body protein 2b-B (chmp2b-b) from Xenopus laevis (African clawed frog).